Reading from the N-terminus, the 624-residue chain is DNA mismatch repair protein MutL (624 aa).

The disordered stretch occupies residues Gly-336–Arg-357. Low complexity predominate over residues Asp-344–His-353.

The protein belongs to the DNA mismatch repair MutL/HexB family.

Its function is as follows. This protein is involved in the repair of mismatches in DNA. It is required for dam-dependent methyl-directed DNA mismatch repair. May act as a 'molecular matchmaker', a protein that promotes the formation of a stable complex between two or more DNA-binding proteins in an ATP-dependent manner without itself being part of a final effector complex. This Chlorobium phaeobacteroides (strain BS1) protein is DNA mismatch repair protein MutL.